The following is a 388-amino-acid chain: Succinate--CoA ligase [ADP-forming] subunit beta (388 aa).

The 236-residue stretch at 9 to 244 folds into the ATP-grasp domain; the sequence is KQLFARYGLP…QSQEDPREAQ (236 aa). Residues lysine 46, 53-55, glutamate 99, threonine 102, and glutamate 107 each bind ATP; that span reads GRG. Mg(2+) contacts are provided by asparagine 199 and aspartate 213. Substrate-binding positions include asparagine 264 and 321–323; that span reads GIV.

Belongs to the succinate/malate CoA ligase beta subunit family. As to quaternary structure, heterotetramer of two alpha and two beta subunits. It depends on Mg(2+) as a cofactor.

It catalyses the reaction succinate + ATP + CoA = succinyl-CoA + ADP + phosphate. The catalysed reaction is GTP + succinate + CoA = succinyl-CoA + GDP + phosphate. It functions in the pathway carbohydrate metabolism; tricarboxylic acid cycle; succinate from succinyl-CoA (ligase route): step 1/1. In terms of biological role, succinyl-CoA synthetase functions in the citric acid cycle (TCA), coupling the hydrolysis of succinyl-CoA to the synthesis of either ATP or GTP and thus represents the only step of substrate-level phosphorylation in the TCA. The beta subunit provides nucleotide specificity of the enzyme and binds the substrate succinate, while the binding sites for coenzyme A and phosphate are found in the alpha subunit. The polypeptide is Succinate--CoA ligase [ADP-forming] subunit beta (Escherichia coli O139:H28 (strain E24377A / ETEC)).